A 336-amino-acid chain; its full sequence is Gibberellin 2-beta-dioxygenase 7 (336 aa).

The region spanning 191 to 291 (LENSFLRLNK…RMSIAFFVCP (101 aa)) is the Fe2OG dioxygenase domain. Residues H216, D218, and H272 each contribute to the Fe cation site. R282 is a catalytic residue. R282 is a binding site for 2-oxoglutarate.

This sequence belongs to the iron/ascorbate-dependent oxidoreductase family. GA2OX subfamily. The cofactor is Fe(2+).

It carries out the reaction gibberellin A1 + 2-oxoglutarate + O2 = gibberellin A8 + succinate + CO2. It functions in the pathway plant hormone biosynthesis; gibberellin biosynthesis. Functionally, catalyzes the 2-beta-hydroxylation of gibberellins (GA) precursors, rendering them unable to be converted to active GAs. Hydroxylates the C20-GA GA12 and GA53, but is not active on C19-GAs, like GA1, GA4, GA9 and GA20. The sequence is that of Gibberellin 2-beta-dioxygenase 7 (GA2OX7) from Arabidopsis thaliana (Mouse-ear cress).